Here is a 1070-residue protein sequence, read N- to C-terminus: MILKENKKMFVLPEFGRIQFEGFQRFIHQDLVEELTNFPKIEDIDQEVEFRLFGERYRLTEPCIKERDAVYQSFTYSSDLYVPAQLMRRRNGRIQRQTVHFGSIPLMNSQGTFVINGIARVVINQILRSPGIYYDSELDHNGNSIYTGTIISDWGGRFKSEIDGKKRIWVRLSKNRKVSIIILLLAMGLNMNDILKNVRYPNIFLRLFQRQAENIQSYEDAIVELYKNLYSAGGNLVFSDSICKELQTKFFQQKFELGQFGRRNLNKKLNLDVPGNEHLLLPQDLLAAVDYLIGVNYGIGTLDDIDDLKNRRVRSVADLLREQLGLALDRLEILIRQTIHTVARRKRLVTPKGLITSAPLTTIFQDFFGSHSLSQFLDQTNPLAELTHKRRLSSLGPGGLTRRTASFQVRDINPSHYGRICPIETSEGMNAGLIASLAIHAKVNDRGSLLSPFYKISKTLGEEHIVYLSSEEDEYYRIATGNTLSLDREIREERATPARYRQEFLTIAWKQIHFRSIFPFQYFSIGTSLIPFLEHNDANRALMGSNMQRQAVPLSQPEKCIVGTGLESQIALDSGSVVVSNQDGQIAYLDGETISILLQNEKTVDIKSIIYERSNNNTCIHQRPVVSQGERLRKGQLLADGTATVGGELALGRNILVAYMPWEGYNFEDAVLISERLIYEDIYTSFHIERYEINIYTTSQGPEKITKEIPHLDSYVLRHLDNNGLVVPGSWVETGDVLVGKLTPQEAENSLRVPEGKLLQAISGIQLANTRESCLKVPIGGRGRVIDVRWIYDEDTLPNIANMVHVYILQKRKIQVGDKVAGRHGNKGIVSKILPRQDMPYLQDGTPVDMILSPLGVPSRMNVGQIFECLLGLAGDILKKHYRITPFDERYEREASRKLVFSELHEASQEAAIPWLFEPDHPGKSRLIDGRTGDIFEQPVTIGKAYMMKLIHQVDDKIHARSSGPYALVTQQPLRGRSRGGGQRVGEMEVWALEGFGVSYILQEMLTIKSDHIPARSKLLGSIVTGKSIPKPNTVPESFRLLVRELRSLAVNSDHNLIFEKDLRKKVKDV.

Belongs to the RNA polymerase beta chain family. In terms of assembly, in plastids the minimal PEP RNA polymerase catalytic core is composed of four subunits: alpha, beta, beta', and beta''. When a (nuclear-encoded) sigma factor is associated with the core the holoenzyme is formed, which can initiate transcription.

It localises to the plastid. The protein localises to the chloroplast. The enzyme catalyses RNA(n) + a ribonucleoside 5'-triphosphate = RNA(n+1) + diphosphate. DNA-dependent RNA polymerase catalyzes the transcription of DNA into RNA using the four ribonucleoside triphosphates as substrates. The chain is DNA-directed RNA polymerase subunit beta from Angiopteris evecta (Mule's foot fern).